Consider the following 92-residue polypeptide: N(2)-fixation sustaining protein CowN (92 aa).

This sequence belongs to the CowN family.

In terms of biological role, is required to sustain N(2)-dependent growth in the presence of low levels of carbon monoxide (CO). Probably acts by protecting the N(2) fixation ability of the nitrogenase complex, which is inactivated in the presence of CO. In Rhodopseudomonas palustris (strain BisB18), this protein is N(2)-fixation sustaining protein CowN.